Consider the following 173-residue polypeptide: Urease accessory protein UreE (173 aa).

A disordered region spans residues 136–173 (PEGGAYAGSGQDHHDHSHGEHTQGEHTHDEAAEPHHHG). Residues 146-173 (QDHHDHSHGEHTQGEHTHDEAAEPHHHG) show a composition bias toward basic and acidic residues.

The protein belongs to the UreE family.

It localises to the cytoplasm. In terms of biological role, involved in urease metallocenter assembly. Binds nickel. Probably functions as a nickel donor during metallocenter assembly. This chain is Urease accessory protein UreE, found in Beijerinckia indica subsp. indica (strain ATCC 9039 / DSM 1715 / NCIMB 8712).